Here is a 186-residue protein sequence, read N- to C-terminus: Ribosome maturation factor RimM (186 aa).

The PRC barrel domain occupies 93–166 (PDEYYDHQLM…RAVIDPPPGL (74 aa)). The interval 160–186 (IDPPPGLIDDRAEVDSSDTEAATEADA) is disordered. The segment covering 174–186 (DSSDTEAATEADA) has biased composition (acidic residues).

Belongs to the RimM family. In terms of assembly, binds ribosomal protein uS19.

The protein resides in the cytoplasm. Functionally, an accessory protein needed during the final step in the assembly of 30S ribosomal subunit, possibly for assembly of the head region. Essential for efficient processing of 16S rRNA. May be needed both before and after RbfA during the maturation of 16S rRNA. It has affinity for free ribosomal 30S subunits but not for 70S ribosomes. This Streptomyces avermitilis (strain ATCC 31267 / DSM 46492 / JCM 5070 / NBRC 14893 / NCIMB 12804 / NRRL 8165 / MA-4680) protein is Ribosome maturation factor RimM.